Consider the following 401-residue polypeptide: Formate-dependent phosphoribosylglycinamide formyltransferase (401 aa).

Residues 22–23 (EL) and E82 each bind N(1)-(5-phospho-beta-D-ribosyl)glycinamide. ATP is bound by residues R115, K157, 162–167 (SSGKGQ), 197–200 (EGFI), and E205. The ATP-grasp domain occupies 120 to 315 (RLAAETLGLP…EFELHARAIL (196 aa)). The Mg(2+) site is built by E274 and E286. N(1)-(5-phospho-beta-D-ribosyl)glycinamide is bound by residues D293, K362, and 369–370 (RR).

The protein belongs to the PurK/PurT family. In terms of assembly, homodimer.

It carries out the reaction N(1)-(5-phospho-beta-D-ribosyl)glycinamide + formate + ATP = N(2)-formyl-N(1)-(5-phospho-beta-D-ribosyl)glycinamide + ADP + phosphate + H(+). It functions in the pathway purine metabolism; IMP biosynthesis via de novo pathway; N(2)-formyl-N(1)-(5-phospho-D-ribosyl)glycinamide from N(1)-(5-phospho-D-ribosyl)glycinamide (formate route): step 1/1. Involved in the de novo purine biosynthesis. Catalyzes the transfer of formate to 5-phospho-ribosyl-glycinamide (GAR), producing 5-phospho-ribosyl-N-formylglycinamide (FGAR). Formate is provided by PurU via hydrolysis of 10-formyl-tetrahydrofolate. In Cupriavidus pinatubonensis (strain JMP 134 / LMG 1197) (Cupriavidus necator (strain JMP 134)), this protein is Formate-dependent phosphoribosylglycinamide formyltransferase.